The following is a 139-amino-acid chain: Protein cornichon homolog 4 (139 aa).

A run of 3 helical transmembrane segments spans residues 5-25 (VFLF…YFII), 57-77 (IVTV…NLPV), and 118-138 (LGFY…ALIN).

This sequence belongs to the cornichon family. Interacts with Sec23/24 complex components SEC24B and SEC24D. Interacts with CCR5. Interacts with ADRB2 in the early secretory pathway.

It is found in the membrane. The protein resides in the endoplasmic reticulum. The protein localises to the endoplasmic reticulum-Golgi intermediate compartment. In terms of biological role, involved in G protein-coupled receptors (GPCRs) trafficking from the endoplasmic reticulum to the cell surface; it promotes the exit of GPCRs from the early secretory pathway, likely through interaction with the COPII machinery. The protein is Protein cornichon homolog 4 (Cnih4) of Mus musculus (Mouse).